The sequence spans 234 residues: MFKTFIIAAVAVATVRAAVIGHDQVVPFAQPTPTSISQTTAVNFKPQLHITNGCHPYPAVDADGNTSGGLNPTGSSSAGCKGSGYGSQIYGRSAWYNGVWAIMYSWYFPKDSPSSGFGHRHDWEHIVVWLDNPAVASPKILAVSTSAHSGYTVYYPPNSNYLNGKSAKIDYYSILLINHAFRMTSDAGETQNLIMWDQMTDAARTALQNTDFGDANVPFKDGNFESKLANAWYQ.

A signal peptide spans 1 to 17; that stretch reads MFKTFIIAAVAVATVRA. N-linked (GlcNAc...) asparagine glycosylation occurs at Asn-65. Positions 101–111 match the Conserved undecapeptide motif I motif; sequence AIMYSWYFPKD. The Hepta-peptide GHRHDWE motif II motif lies at 118-124; the sequence is GHRHDWE.

Belongs to the Necrosis inducing protein (NPP1) family.

It localises to the secreted. Its function is as follows. Secreted effector that contributes moderately to virulence during infection by P.capsici. Does not cause visible reaction of C.annuum for several days after inoculation, but by 7 days after inoculation, small necrotic lesions become visible. Leads only to chlorotic areas, without necrosis at 7 days after non-host N.benthamiana leaves infection. The sequence is that of NLP effector protein 10 from Phytophthora capsici.